Reading from the N-terminus, the 500-residue chain is Ent-cassadiene C11-alpha-hydroxylase 1 (500 aa).

A helical membrane pass occupies residues 4-24; that stretch reads SQVWLLWGALSVAVLFYLSTL. Cys442 contributes to the heme binding site.

The protein belongs to the cytochrome P450 family. The cofactor is heme.

It localises to the membrane. The catalysed reaction is ent-cassa-12,15-diene + reduced [NADPH--hemoprotein reductase] + O2 = ent-11beta-hydroxycassa-12,15-diene + oxidized [NADPH--hemoprotein reductase] + H2O + H(+). In terms of biological role, enzyme of the diterpenoid metabolism involved in the biosynthesis of antibacterial oryzalides such as phytocassane. Can use ent-cassadiene as substrate, but not C11-alpha-hydroxy-ent-cassadiene, ent-pimaradiene, ent-sandaracopimaradiene, ent-kaurene, ent-isokaurene, syn-pimaradiene, syn-stemarene, syn-stemodene. The protein is Ent-cassadiene C11-alpha-hydroxylase 1 of Oryza sativa subsp. japonica (Rice).